The chain runs to 351 residues: Deoxyguanosinetriphosphate triphosphohydrolase-like protein (351 aa).

The 122-residue stretch at 75–196 (RLTHTLEVAE…VRVADIIAYL (122 aa)) folds into the HD domain.

It belongs to the dGTPase family. Type 2 subfamily.

This is Deoxyguanosinetriphosphate triphosphohydrolase-like protein from Desulfatibacillum aliphaticivorans.